The following is a 268-amino-acid chain: Glutamine amidotransferase-like class 1 domain-containing protein 3, mitochondrial (268 aa).

The N-terminal 41 residues, 1-41 (MAAVRVLVASRLAAASAFTSLSPGGRTPSQRAALHLSVPRP), are a transit peptide targeting the mitochondrion. An N6-acetyllysine mark is found at lysine 151, lysine 157, and lysine 164. The residue at position 203 (lysine 203) is an N6-acetyllysine; alternate. Lysine 203 carries the N6-succinyllysine; alternate modification. The residue at position 219 (lysine 219) is an N6-acetyllysine. 2 positions are modified to N6-acetyllysine; alternate: lysine 223 and lysine 233. N6-succinyllysine; alternate occurs at positions 223 and 233.

The protein belongs to the GATD3 family.

It localises to the mitochondrion. In Homo sapiens (Human), this protein is Glutamine amidotransferase-like class 1 domain-containing protein 3, mitochondrial.